A 1075-amino-acid polypeptide reads, in one-letter code: MAAEKLRDLSQPIDVGVLDATVAAFFVTGSKEERAAADQILRDLQANPDMWLQVVHILQNTNSLDTKFFALQVLEGVIKYRWNALPVEQRDGMKNYISEVIVQLSSNEASFRSERLYVNKLNVILVQIVKHDWPAKWTSFIPDLVAAAKTSETICENCMAILKLLSEEVFDFSRGEMTQQKIKELKQSLNSEFKLIHELCLYVLSASQRQDLIRATLSALHAYLSWIPLGYIFESTLLETLLKFFPVPAYRNLTIQCLTEVAALNFGDFYNVQYVKMYTIFIGQLRIILPPSTKIPEAYSSGSGEEQAFIQNLALFFTSFFKFHIRVLESTPEVVSLLLAGLEYLINISYVDDTEVFKVCLDYWNSLVLELFDAHHNSDNPAVSASLMGLQPFLPGMVDGLGSQVMQRRQLYSHPMSKLRGLMINRMAKPEEVLIVEDENGNIVRETMKDNDVLVQYKIMRETLIYLSHLDHDDTEKQMLRKLNKQLSGEEWAWNNLNTLCWAIGSISGSMAEDQENRFLVMVIRDLLNLCEITKGKDNKAVIASNIMYVVGQYPRFLRAHWKFLKTVVNKLFEFMHETHPGVQDMACDTFLKIVQKCKRKFVIVQVGENEPFVSELLTGLATTVQDLEPHQIHSFYESVGNMIQAESDPQKRDEYLQRLMALPNQKWAEIIGQARHSVEFLKDQVVIRTVLNILQTNTSAATSLGTYFLSQISLIFLDMLNVYRMYSELVSTNITEGGPYASKTSFVKLLRSVKRETLKLIETFLDKAEDQPHIGKQFVPPMMESVLGDYARNVPDARESEVLSLFATIINKYKATMLDDVPHIFEAVFQCTLEMITKNFEDYPEHRLKFFSLLRAIATFCFPALIKLSSPQLKLVMDSIIWAFRHTERNIAETGLNLLLEMLKNFQQSEFCNQFYRSYFMQIEQEIFAVLTDTFHKPGFKLHVLVLQQLFCLPESGALTEPLWDATTVPYPYPDNVAFVREYTIKLLSSSFPNMTAAEVTQFVNGLYESRNDPSGFKNNIRDFLVQSKEFSAQDNKDLYAEEAAAQRERERQRMLSIPGLIAPNEIQDEMVDS.

In terms of domain architecture, Importin N-terminal spans 37 to 103 (ADQILRDLQA…KNYISEVIVQ (67 aa)). 12 HEAT repeats span residues 91–130 (DGMK…QIVK), 135–171 (AKWT…EVFD), 232–267 (IFES…LNFG), 336–373 (SLLL…ELFD), 388–425 (MGLQ…LMIN), 474–513 (DTEK…SMAE), 563–600 (KFLK…KCKR), 612–649 (PFVS…AESD), 682–719 (LKDQ…IFLD), 756–793 (RETL…DYAR), 798–835 (ARES…CTLE), and 894–934 (ETGL…VLTD).

This sequence belongs to the exportin family. As to quaternary structure, interacts with RAN1. In terms of tissue distribution, expressed ubiquitously, with higher levels in stems, inflorescences and roots. Present in mature pollen grains, unpollinated pistils, and 2-week-old seedlings.

The protein resides in the nucleus. It is found in the nuclear pore complex. The protein localises to the nucleus membrane. Receptor for the leucine-rich nuclear export signal (NES). Binds cooperatively to the NES on its target protein and to the small GTPase Ran in its active GTP-bound form. Required for the maternal-to-embryonic transition and during gametophyte development. Involved in heat-induced oxidative stress basal resistance. This is Protein EXPORTIN 1A from Arabidopsis thaliana (Mouse-ear cress).